A 161-amino-acid chain; its full sequence is uncharacterized protein (161 aa).

The protein belongs to the sapovirus VP3 family.

This is an uncharacterized protein from Sapporo virus (strain Human/United Kingdom/Manchester/1993) (Hu/SV/Man/1993/UK).